A 179-amino-acid polypeptide reads, in one-letter code: ATP-dependent protease subunit HslV (179 aa).

Residue Thr-7 is part of the active site. Na(+)-binding residues include Gly-162, Cys-165, and Thr-168.

The protein belongs to the peptidase T1B family. HslV subfamily. As to quaternary structure, a double ring-shaped homohexamer of HslV is capped on each side by a ring-shaped HslU homohexamer. The assembly of the HslU/HslV complex is dependent on binding of ATP.

The protein resides in the cytoplasm. It carries out the reaction ATP-dependent cleavage of peptide bonds with broad specificity.. With respect to regulation, allosterically activated by HslU binding. Its function is as follows. Protease subunit of a proteasome-like degradation complex believed to be a general protein degrading machinery. This chain is ATP-dependent protease subunit HslV, found in Bordetella bronchiseptica (strain ATCC BAA-588 / NCTC 13252 / RB50) (Alcaligenes bronchisepticus).